The sequence spans 157 residues: Protein Smg (157 aa).

Belongs to the Smg family.

This is Protein Smg from Escherichia coli O8 (strain IAI1).